Reading from the N-terminus, the 28-residue chain is Small spore coat assembly protein A (28 aa).

Residues 8-28 form a helical membrane-spanning segment; sequence GFALLVVLFILLIIVGAAYIY.

Belongs to the SscA family.

Its subcellular location is the spore coat. The protein resides in the membrane. Its function is as follows. Spore protein involved in the assembly of several components of the spore coat, including CotB, CotG and CotH, and in spore germination. The sequence is that of Small spore coat assembly protein A from Bacillus subtilis (strain 168).